A 193-amino-acid chain; its full sequence is Orotate phosphoribosyltransferase (193 aa).

Residues Arg85, Lys89, and 111-119 (DDVLTTGKS) contribute to the 5-phospho-alpha-D-ribose 1-diphosphate site. Orotate is bound by residues Thr115 and Arg143.

The protein belongs to the purine/pyrimidine phosphoribosyltransferase family. PyrE subfamily. In terms of assembly, homodimer. Requires Mg(2+) as cofactor.

It catalyses the reaction orotidine 5'-phosphate + diphosphate = orotate + 5-phospho-alpha-D-ribose 1-diphosphate. Its pathway is pyrimidine metabolism; UMP biosynthesis via de novo pathway; UMP from orotate: step 1/2. Catalyzes the transfer of a ribosyl phosphate group from 5-phosphoribose 1-diphosphate to orotate, leading to the formation of orotidine monophosphate (OMP). The chain is Orotate phosphoribosyltransferase from Pyrobaculum aerophilum (strain ATCC 51768 / DSM 7523 / JCM 9630 / CIP 104966 / NBRC 100827 / IM2).